We begin with the raw amino-acid sequence, 167 residues long: Lipoprotein signal peptidase (167 aa).

3 consecutive transmembrane segments (helical) span residues 8-28 (FFLLGLILTVGIDQTVKYWIM), 61-81 (FSHWGLIALTLIILIFLLWLW), and 93-113 (FGLTLIIGGAIGNLIDRICFY). Catalysis depends on residues Asp117 and Asp136. The chain crosses the membrane as a helical span at residues 126–146 (IFYFAVFNLADTFITLGVIAI).

It belongs to the peptidase A8 family.

It localises to the cell inner membrane. The enzyme catalyses Release of signal peptides from bacterial membrane prolipoproteins. Hydrolyzes -Xaa-Yaa-Zaa-|-(S,diacylglyceryl)Cys-, in which Xaa is hydrophobic (preferably Leu), and Yaa (Ala or Ser) and Zaa (Gly or Ala) have small, neutral side chains.. Its pathway is protein modification; lipoprotein biosynthesis (signal peptide cleavage). Functionally, this protein specifically catalyzes the removal of signal peptides from prolipoproteins. This chain is Lipoprotein signal peptidase, found in Bartonella quintana (strain Toulouse) (Rochalimaea quintana).